The sequence spans 352 residues: GTPase Obg (352 aa).

An Obg domain is found at 1–159 (MQFIDQAEIQ…RMLRLELKLL (159 aa)). The OBG-type G domain maps to 160–330 (AEVGIIGLPN…LMQEIWGLLE (171 aa)). Residues 166 to 173 (GLPNAGKS), 191 to 195 (FTTLV), 213 to 216 (DIPG), 280 to 283 (NKVD), and 311 to 313 (SAV) each bind GTP. 2 residues coordinate Mg(2+): S173 and T193.

The protein belongs to the TRAFAC class OBG-HflX-like GTPase superfamily. OBG GTPase family. In terms of assembly, monomer. Requires Mg(2+) as cofactor.

It localises to the cytoplasm. In terms of biological role, an essential GTPase which binds GTP, GDP and possibly (p)ppGpp with moderate affinity, with high nucleotide exchange rates and a fairly low GTP hydrolysis rate. Plays a role in control of the cell cycle, stress response, ribosome biogenesis and in those bacteria that undergo differentiation, in morphogenesis control. The sequence is that of GTPase Obg from Trichodesmium erythraeum (strain IMS101).